Reading from the N-terminus, the 178-residue chain is MNTPVSVNEKKDFVKWFLNNYQLKQRECVWILNYLMSHDQLMHKVHFVEHAKYCPRGLVMSANCVKDTPFHFFKQNVMTTDAEKSFHDIRLNRDEDIYIQLNFKSSFQNANYVAVLEENPYLPKHIEVNEKDRLLAERFLEESVFSFRRERLLKQIDEALDKQDKEAFHRLTAELKML.

The protein belongs to the UPF0302 family.

The protein is UPF0302 protein BCAH187_A1683 of Bacillus cereus (strain AH187).